Reading from the N-terminus, the 120-residue chain is Holo-[acyl-carrier-protein] synthase (120 aa).

Mg(2+) is bound by residues D8 and E58.

The protein belongs to the P-Pant transferase superfamily. AcpS family. The cofactor is Mg(2+).

It is found in the cytoplasm. The catalysed reaction is apo-[ACP] + CoA = holo-[ACP] + adenosine 3',5'-bisphosphate + H(+). Functionally, transfers the 4'-phosphopantetheine moiety from coenzyme A to a Ser of acyl-carrier-protein. The chain is Holo-[acyl-carrier-protein] synthase from Limosilactobacillus reuteri (strain DSM 20016) (Lactobacillus reuteri).